The sequence spans 274 residues: Nitrogenase iron protein (274 aa).

Residue Gly-8–Ser-15 participates in ATP binding. [4Fe-4S] cluster is bound at residue Cys-94. At Arg-97 the chain carries ADP-ribosylarginine; by dinitrogenase reductase ADP-ribosyltransferase. Cys-131 contacts [4Fe-4S] cluster.

It belongs to the NifH/BchL/ChlL family. In terms of assembly, homodimer. [4Fe-4S] cluster is required as a cofactor. In terms of processing, the reversible ADP-ribosylation of Arg-97 inactivates the nitrogenase reductase and regulates nitrogenase activity.

It catalyses the reaction N2 + 8 reduced [2Fe-2S]-[ferredoxin] + 16 ATP + 16 H2O = H2 + 8 oxidized [2Fe-2S]-[ferredoxin] + 2 NH4(+) + 16 ADP + 16 phosphate + 6 H(+). In terms of biological role, the key enzymatic reactions in nitrogen fixation are catalyzed by the nitrogenase complex, which has 2 components: the iron protein and the molybdenum-iron protein. The chain is Nitrogenase iron protein from Chlorobium luteolum (strain DSM 273 / BCRC 81028 / 2530) (Pelodictyon luteolum).